The primary structure comprises 200 residues: ATP-dependent Clp protease proteolytic subunit (200 aa).

Ser-102 acts as the Nucleophile in catalysis. The active site involves His-127.

This sequence belongs to the peptidase S14 family. Fourteen ClpP subunits assemble into 2 heptameric rings which stack back to back to give a disk-like structure with a central cavity, resembling the structure of eukaryotic proteasomes.

It is found in the cytoplasm. It carries out the reaction Hydrolysis of proteins to small peptides in the presence of ATP and magnesium. alpha-casein is the usual test substrate. In the absence of ATP, only oligopeptides shorter than five residues are hydrolyzed (such as succinyl-Leu-Tyr-|-NHMec, and Leu-Tyr-Leu-|-Tyr-Trp, in which cleavage of the -Tyr-|-Leu- and -Tyr-|-Trp bonds also occurs).. In terms of biological role, cleaves peptides in various proteins in a process that requires ATP hydrolysis. Has a chymotrypsin-like activity. Plays a major role in the degradation of misfolded proteins. In Dehalococcoides mccartyi (strain ATCC BAA-2266 / KCTC 15142 / 195) (Dehalococcoides ethenogenes (strain 195)), this protein is ATP-dependent Clp protease proteolytic subunit.